A 745-amino-acid polypeptide reads, in one-letter code: uncharacterized protein (745 aa).

An HTH araC/xylS-type domain is found at 158 to 256 (NQVCDYIELH…HQTPKQYRGD (99 aa)). 2 DNA-binding regions (H-T-H motif) span residues 175 to 196 (SELSEYVGWSESHLSKKFTESL) and 223 to 246 (ITDIALQNGFSSAASFARTFKHFT).

This is an uncharacterized protein from Staphylococcus aureus (strain MW2).